The chain runs to 153 residues: Phosphopantetheine adenylyltransferase (153 aa).

Residue serine 11 coordinates substrate. Residues 11-12 (SF) and histidine 19 each bind ATP. Substrate-binding residues include lysine 43, threonine 75, and arginine 89. ATP-binding positions include 90-92 (GIR), glutamate 100, and 124-130 (LSFISSS).

It belongs to the bacterial CoaD family. In terms of assembly, homohexamer. Mg(2+) serves as cofactor.

It localises to the cytoplasm. The catalysed reaction is (R)-4'-phosphopantetheine + ATP + H(+) = 3'-dephospho-CoA + diphosphate. It functions in the pathway cofactor biosynthesis; coenzyme A biosynthesis; CoA from (R)-pantothenate: step 4/5. Reversibly transfers an adenylyl group from ATP to 4'-phosphopantetheine, yielding dephospho-CoA (dPCoA) and pyrophosphate. The polypeptide is Phosphopantetheine adenylyltransferase (Porphyromonas gingivalis (strain ATCC 33277 / DSM 20709 / CIP 103683 / JCM 12257 / NCTC 11834 / 2561)).